Consider the following 40-residue polypeptide: Photosystem II reaction center protein J (40 aa).

The chain crosses the membrane as a helical span at residues 8–28; it reads IPLWIIGTGAGILVIGLIGIF.

This sequence belongs to the PsbJ family. In terms of assembly, PSII is composed of 1 copy each of membrane proteins PsbA, PsbB, PsbC, PsbD, PsbE, PsbF, PsbH, PsbI, PsbJ, PsbK, PsbL, PsbM, PsbT, PsbX, PsbY, PsbZ, Psb30/Ycf12, at least 3 peripheral proteins of the oxygen-evolving complex and a large number of cofactors. It forms dimeric complexes.

It localises to the plastid. Its subcellular location is the chloroplast thylakoid membrane. Its function is as follows. One of the components of the core complex of photosystem II (PSII). PSII is a light-driven water:plastoquinone oxidoreductase that uses light energy to abstract electrons from H(2)O, generating O(2) and a proton gradient subsequently used for ATP formation. It consists of a core antenna complex that captures photons, and an electron transfer chain that converts photonic excitation into a charge separation. This Aethionema grandiflorum (Persian stone-cress) protein is Photosystem II reaction center protein J.